A 208-amino-acid chain; its full sequence is Translation initiation factor 2 subunit beta (208 aa).

A TRAM domain is found at 145–203 (VIEEGETYELRIESVGSKGDGIAKVDKYLIFVPNTSKGEIVKAKVKKISGTLAFAEIVE).

The protein belongs to the eIF-2-beta/eIF-5 family. In terms of assembly, heterotrimer composed of an alpha, a beta and a gamma chain.

Functionally, eIF-2 functions in the early steps of protein synthesis by forming a ternary complex with GTP and initiator tRNA. This chain is Translation initiation factor 2 subunit beta, found in Methanothrix thermoacetophila (strain DSM 6194 / JCM 14653 / NBRC 101360 / PT) (Methanosaeta thermophila).